The primary structure comprises 161 residues: Leucine-rich colipase-like protein 1 (161 aa).

The N-terminal stretch at 1–25 is a signal peptide; it reads MSVSVWPPLLLLLLLLLLWAVPTFQ.

This is Leucine-rich colipase-like protein 1 (Lrcol1) from Mus musculus (Mouse).